We begin with the raw amino-acid sequence, 458 residues long: Adenylosuccinate synthetase (458 aa).

GTP contacts are provided by residues 17-23 and 45-47; these read GDEGKGK and GHT. The active-site Proton acceptor is the aspartate 18. Aspartate 18 and glycine 45 together coordinate Mg(2+). IMP-binding positions include 18–21, 43–46, threonine 137, arginine 151, glutamine 247, threonine 262, and arginine 330; these read DEGK and NAGH. Histidine 46 (proton donor) is an active-site residue. 326–332 serves as a coordination point for substrate; that stretch reads VTTGRSR. Residues arginine 332, 358–360, and 440–442 contribute to the GTP site; these read KLD and STS.

Belongs to the adenylosuccinate synthetase family. In terms of assembly, homodimer. Mg(2+) is required as a cofactor.

It is found in the cytoplasm. The enzyme catalyses IMP + L-aspartate + GTP = N(6)-(1,2-dicarboxyethyl)-AMP + GDP + phosphate + 2 H(+). Its pathway is purine metabolism; AMP biosynthesis via de novo pathway; AMP from IMP: step 1/2. Functionally, plays an important role in the de novo pathway of purine nucleotide biosynthesis. Catalyzes the first committed step in the biosynthesis of AMP from IMP. The sequence is that of Adenylosuccinate synthetase from Delftia acidovorans (strain DSM 14801 / SPH-1).